Consider the following 376-residue polypeptide: Glutamate 5-kinase (376 aa).

K10 provides a ligand contact to ATP. Residues S50, D137, and N149 each contribute to the substrate site. Position 169–170 (169–170 (TD)) interacts with ATP. The 79-residue stretch at 275-353 (RGRLVLDAGA…AEIAGVLGFM (79 aa)) folds into the PUA domain.

The protein belongs to the glutamate 5-kinase family.

It is found in the cytoplasm. It catalyses the reaction L-glutamate + ATP = L-glutamyl 5-phosphate + ADP. It functions in the pathway amino-acid biosynthesis; L-proline biosynthesis; L-glutamate 5-semialdehyde from L-glutamate: step 1/2. Catalyzes the transfer of a phosphate group to glutamate to form L-glutamate 5-phosphate. The polypeptide is Glutamate 5-kinase (Alcanivorax borkumensis (strain ATCC 700651 / DSM 11573 / NCIMB 13689 / SK2)).